The chain runs to 320 residues: ATP-dependent 6-phosphofructokinase (320 aa).

Gly-12 provides a ligand contact to ATP. ADP-binding positions include 22–26 and 55–60; these read RGVVR and RYSVSD. Residues 73–74 and 103–106 contribute to the ATP site; these read RF and GDGS. Asp-104 contacts Mg(2+). Substrate is bound at residue 126-128; sequence TID. Asp-128 (proton acceptor) is an active-site residue. Residue Arg-155 participates in ADP binding. Residues Arg-163 and 170-172 contribute to the substrate site; that span reads MGR. ADP-binding positions include 186–188, Lys-212, and 214–216; these read GCE and KKH. Substrate is bound by residues Glu-223, Arg-244, and 250-253; that span reads HIQR.

Belongs to the phosphofructokinase type A (PFKA) family. ATP-dependent PFK group I subfamily. Prokaryotic clade 'B1' sub-subfamily. As to quaternary structure, homotetramer. Mg(2+) serves as cofactor.

Its subcellular location is the cytoplasm. It carries out the reaction beta-D-fructose 6-phosphate + ATP = beta-D-fructose 1,6-bisphosphate + ADP + H(+). It functions in the pathway carbohydrate degradation; glycolysis; D-glyceraldehyde 3-phosphate and glycerone phosphate from D-glucose: step 3/4. Allosterically activated by ADP and other diphosphonucleosides, and allosterically inhibited by phosphoenolpyruvate. Functionally, catalyzes the phosphorylation of D-fructose 6-phosphate to fructose 1,6-bisphosphate by ATP, the first committing step of glycolysis. The polypeptide is ATP-dependent 6-phosphofructokinase (Serratia proteamaculans (strain 568)).